A 398-amino-acid polypeptide reads, in one-letter code: tRNA-specific 2-thiouridylase MnmA (398 aa).

ATP-binding positions include 20–27 (AMSGGVDS) and Leu46. Cys114 functions as the Nucleophile in the catalytic mechanism. Cys114 and Cys210 are joined by a disulfide. Gly138 contributes to the ATP binding site. Positions 160–162 (RDQ) are interaction with tRNA. The active-site Cysteine persulfide intermediate is Cys210.

It belongs to the MnmA/TRMU family.

The protein resides in the cytoplasm. The enzyme catalyses S-sulfanyl-L-cysteinyl-[protein] + uridine(34) in tRNA + AH2 + ATP = 2-thiouridine(34) in tRNA + L-cysteinyl-[protein] + A + AMP + diphosphate + H(+). In terms of biological role, catalyzes the 2-thiolation of uridine at the wobble position (U34) of tRNA, leading to the formation of s(2)U34. This Brucella abortus (strain S19) protein is tRNA-specific 2-thiouridylase MnmA.